Consider the following 321-residue polypeptide: 37 kDa cell surface protein (321 aa).

The protein localises to the secreted. It localises to the cell wall. This is 37 kDa cell surface protein (CSP37) from Candida albicans (Yeast).